We begin with the raw amino-acid sequence, 269 residues long: MKILMSNDDGVYAPGLLALYEALSTMAEVMVVAPNSEQSGCASALSITTPLYTHQLPSGFIAVNGTPADCIYLALNEIYSDTDFDCVITGINSGANLGQDVLFSGTFGAALTAQLFGIPAIATSLVGGGAKSSEQECERHYQMAASEIVKLLTDTPILDICKNLPYHVLNVNIPDVSNADEINGRKMTVLGHRKIARPVHHVVDPRGRDAYWLSLRKRQDIWADNTDHVSSGTTMTDDQAVAAGYISLSPVRLHHTPAATLDMLSALML.

4 residues coordinate a divalent metal cation: Asp-8, Asp-9, Ser-39, and Asn-92.

This sequence belongs to the SurE nucleotidase family. A divalent metal cation serves as cofactor.

It is found in the cytoplasm. The enzyme catalyses a ribonucleoside 5'-phosphate + H2O = a ribonucleoside + phosphate. Its function is as follows. Nucleotidase that shows phosphatase activity on nucleoside 5'-monophosphates. This chain is 5'-nucleotidase SurE, found in Psychrobacter cryohalolentis (strain ATCC BAA-1226 / DSM 17306 / VKM B-2378 / K5).